The following is a 315-amino-acid chain: Ribosomal protein L11 methyltransferase (315 aa).

The S-adenosyl-L-methionine site is built by T164, G185, D207, and N249.

Belongs to the methyltransferase superfamily. PrmA family.

The protein localises to the cytoplasm. The enzyme catalyses L-lysyl-[protein] + 3 S-adenosyl-L-methionine = N(6),N(6),N(6)-trimethyl-L-lysyl-[protein] + 3 S-adenosyl-L-homocysteine + 3 H(+). Functionally, methylates ribosomal protein L11. The sequence is that of Ribosomal protein L11 methyltransferase from Lactobacillus johnsonii (strain CNCM I-12250 / La1 / NCC 533).